Reading from the N-terminus, the 300-residue chain is Pantoate--beta-alanine ligase (300 aa).

43-50 (MGYLHSGH) contacts ATP. The Proton donor role is filled by H50. (R)-pantoate is bound at residue Q74. Q74 contacts beta-alanine. 162-165 (GQKD) provides a ligand contact to ATP. Q168 lines the (R)-pantoate pocket. ATP contacts are provided by residues I191 and 199 to 202 (KSSR).

The protein belongs to the pantothenate synthetase family. Homodimer.

It localises to the cytoplasm. It carries out the reaction (R)-pantoate + beta-alanine + ATP = (R)-pantothenate + AMP + diphosphate + H(+). Its pathway is cofactor biosynthesis; (R)-pantothenate biosynthesis; (R)-pantothenate from (R)-pantoate and beta-alanine: step 1/1. Functionally, catalyzes the condensation of pantoate with beta-alanine in an ATP-dependent reaction via a pantoyl-adenylate intermediate. The sequence is that of Pantoate--beta-alanine ligase (panC) from Dictyostelium discoideum (Social amoeba).